The chain runs to 258 residues: Ribonuclease PH (258 aa).

Phosphate contacts are provided by residues Arg-88 and Gly-126–Arg-128.

Belongs to the RNase PH family. As to quaternary structure, homohexameric ring arranged as a trimer of dimers.

The enzyme catalyses tRNA(n+1) + phosphate = tRNA(n) + a ribonucleoside 5'-diphosphate. In terms of biological role, phosphorolytic 3'-5' exoribonuclease that plays an important role in tRNA 3'-end maturation. Removes nucleotide residues following the 3'-CCA terminus of tRNAs; can also add nucleotides to the ends of RNA molecules by using nucleoside diphosphates as substrates, but this may not be physiologically important. Probably plays a role in initiation of 16S rRNA degradation (leading to ribosome degradation) during starvation. The protein is Ribonuclease PH of Mycobacteroides abscessus (strain ATCC 19977 / DSM 44196 / CCUG 20993 / CIP 104536 / JCM 13569 / NCTC 13031 / TMC 1543 / L948) (Mycobacterium abscessus).